The sequence spans 238 residues: MPYQIENRPPDLRERMYFPEIIRGIGAVTKHFLRNLFFTRDKNPDILERRRGEFGWADNVTLQYPEERAPYPPGYRGLHRLVPREDGRARCVACYMCATACPAQCIYIEAGEYADDPIEKYPVKFVIDELRCIVCGFCVEACPKDAIRMDSGEHTPPSYERGAQIWDEKRLLRGPPVSYQYDPWLRRGSPSIPAEKLEEMRARARPFSTVATDEYAQTPGFSVRALAQEAKDRAERAK.

4Fe-4S ferredoxin-type domains follow at residues 81-111 and 123-152; these read LVPR…IEAG and VKFV…MDSG. [4Fe-4S] cluster is bound by residues C91, C94, C97, C101, C132, C135, C138, and C142.

Belongs to the complex I 23 kDa subunit family. As to quaternary structure, NDH-1 is composed of 14 different subunits. Subunits NuoA, H, J, K, L, M, N constitute the membrane sector of the complex. [4Fe-4S] cluster serves as cofactor.

The protein resides in the cell inner membrane. It carries out the reaction a quinone + NADH + 5 H(+)(in) = a quinol + NAD(+) + 4 H(+)(out). Functionally, NDH-1 shuttles electrons from NADH, via FMN and iron-sulfur (Fe-S) centers, to quinones in the respiratory chain. The immediate electron acceptor for the enzyme in this species is believed to be ubiquinone. Couples the redox reaction to proton translocation (for every two electrons transferred, four hydrogen ions are translocated across the cytoplasmic membrane), and thus conserves the redox energy in a proton gradient. The sequence is that of NADH-quinone oxidoreductase subunit I from Anaeromyxobacter sp. (strain Fw109-5).